We begin with the raw amino-acid sequence, 217 residues long: MMAAGPRTSLLLAFALLCLPWTQVVGAFPAMSLSSLFANAVLWAQHLHQLAADTFKEFERTYIPEGQRYSIQNTQVAFCFSETIPAPTGKNEAQQKSDLELLRISLLLIQSWLGPLQFLSRVFTNSLVFGTSDRVYEKLKDLEEGILALMRELEDGTPRAGQILKQTYDKFDTNMRSDDALLKNYGLLSCFRKDLHKTETYLRVMKCRRFGEASCAF.

A signal peptide spans 1–26 (MMAAGPRTSLLLAFALLCLPWTQVVG). His46 provides a ligand contact to Zn(2+). Cys79 and Cys190 form a disulfide bridge. Position 132 is a phosphoserine (Ser132). Zn(2+) is bound at residue Glu199. A disulfide bridge connects residues Cys207 and Cys215.

The protein belongs to the somatotropin/prolactin family.

It is found in the secreted. Plays an important role in growth control. Its major role in stimulating body growth is to stimulate the liver and other tissues to secrete IGF1. It stimulates both the differentiation and proliferation of myoblasts. It also stimulates amino acid uptake and protein synthesis in muscle and other tissues. This is Somatotropin (GH1) from Bubalus bubalis (Domestic water buffalo).